We begin with the raw amino-acid sequence, 302 residues long: 4-hydroxy-tetrahydrodipicolinate synthase (302 aa).

A pyruvate-binding site is contributed by T46. The Proton donor/acceptor role is filled by Y135. Catalysis depends on K164, which acts as the Schiff-base intermediate with substrate. V206 is a pyruvate binding site.

This sequence belongs to the DapA family. As to quaternary structure, homotetramer; dimer of dimers.

The protein localises to the cytoplasm. It catalyses the reaction L-aspartate 4-semialdehyde + pyruvate = (2S,4S)-4-hydroxy-2,3,4,5-tetrahydrodipicolinate + H2O + H(+). Its pathway is amino-acid biosynthesis; L-lysine biosynthesis via DAP pathway; (S)-tetrahydrodipicolinate from L-aspartate: step 3/4. In terms of biological role, catalyzes the condensation of (S)-aspartate-beta-semialdehyde [(S)-ASA] and pyruvate to 4-hydroxy-tetrahydrodipicolinate (HTPA). This chain is 4-hydroxy-tetrahydrodipicolinate synthase, found in Acidobacterium capsulatum (strain ATCC 51196 / DSM 11244 / BCRC 80197 / JCM 7670 / NBRC 15755 / NCIMB 13165 / 161).